A 246-amino-acid polypeptide reads, in one-letter code: Protein DEHYDRATION-INDUCED 19 homolog 3 (246 aa).

The tract at residues 185–230 is disordered; the sequence is ERSKAPVPIPDDTSIHKDTPAQPWESRIDSSLTSEEREQKRKQATD. Basic and acidic residues predominate over residues 218–229; that stretch reads SEEREQKRKQAT.

The protein belongs to the Di19 family.

This chain is Protein DEHYDRATION-INDUCED 19 homolog 3 (DI19-3), found in Oryza sativa subsp. japonica (Rice).